The chain runs to 804 residues: MLDLVHKIFDSRNRKIKRKLKDGLEQVNSLETRIRDLSSDELRNKTSEFKERLFKQSASLDEILPEAYACVREASLRTLGMRHFDVQIMGGIVLHWGMISEMHTGEGKTLVATLAAYLNALSEKGVHVVTVNDYLARRDTEWMKQIYRHLGLQVSCITSDMRDPERAHAYKADITYATNNELGFDYLRDNMKFSKGEMVQRDLHYAIVDEVDSILIDEARTPLIISGVTDNASYLYASMNKLAEKLDSTLYIVDEKTRTVSLTEEGQEAIEKLLMAEKFIESGSSLYEPQNLQLVHCLNQSLKAINLFQKNKDYIVQDGQIVLIDEFTGRMMHGRRYSEGLHQALEAKENLKIQNENQTLASITFQNYFRMYGKLSGMTGTAATEREEFSTIYGLEVVQIPSHLPVRRVDHDDEIYASKKEKYEAILALAKECHEKLQPILIGTTSIENSEELSRELKKAKLKHSVLNAKQHAFEAEIIAQAGKPGAITIATNMAGRGTDIQLGGNINFNISANDEAEKEHAKNEEIVRKAGGLYVIGTERHESRRIDNQLRGRSGRQGDPGESKFFLSLDDDLLRVFGTSGIRNMLKKQLSNNGAIKHSYITRSLEKAQKKVESRNYEIRKNLIKFDDVINEQRKVIFSQRNNIMESGDIDLLPIVTEVNAKTLENARSKNFYDISTLIHSMQSIYNEDFKELHKTEDIDGFIDSKTKSIIAEKERAHVEFLLEIKKRIMIAILDQLWKEHLQFLENLRLSINLKAVAQKNPLIEFKHEAFQAFQRLSERWHENIIASFVRVKLVERMHMKVM.

ATP-binding positions include Q87, 105–109 (GEGKT), and D500.

Belongs to the SecA family. In terms of assembly, monomer and homodimer. Part of the essential Sec protein translocation apparatus which comprises SecA, SecYEG and auxiliary proteins SecDF-YajC and YidC.

Its subcellular location is the cell inner membrane. It localises to the cytoplasm. It catalyses the reaction ATP + H2O + cellular proteinSide 1 = ADP + phosphate + cellular proteinSide 2.. Functionally, part of the Sec protein translocase complex. Interacts with the SecYEG preprotein conducting channel. Has a central role in coupling the hydrolysis of ATP to the transfer of proteins into and across the cell membrane, serving both as a receptor for the preprotein-SecB complex and as an ATP-driven molecular motor driving the stepwise translocation of polypeptide chains across the membrane. The protein is Protein translocase subunit SecA of Neorickettsia sennetsu (strain ATCC VR-367 / Miyayama) (Ehrlichia sennetsu).